The chain runs to 95 residues: Blastocyst protein 4 (95 aa).

A signal peptide spans 1-20; it reads MGAVFAIIGGFALDSPILRL.

The chain is Blastocyst protein 4 from Oryctolagus cuniculus (Rabbit).